A 171-amino-acid chain; its full sequence is uncharacterized protein (171 aa).

The chain crosses the membrane as a helical span at residues 21 to 43 (GVAASLLILLAVYTIFQSTVVIA).

Its subcellular location is the membrane. This is an uncharacterized protein from Archaeoglobus fulgidus (strain ATCC 49558 / DSM 4304 / JCM 9628 / NBRC 100126 / VC-16).